Here is a 368-residue protein sequence, read N- to C-terminus: 3-isopropylmalate dehydrogenase (368 aa).

Residue 79–92 (GPRYEGLPWDLRPE) participates in NAD(+) binding. Residues Arg99, Arg109, Arg138, and Asp228 each coordinate substrate. Mg(2+)-binding residues include Asp228, Asp252, and Asp256. 292–304 (GSAPDIAGQDRAN) contacts NAD(+).

Belongs to the isocitrate and isopropylmalate dehydrogenases family. LeuB type 1 subfamily. In terms of assembly, homodimer. Mg(2+) is required as a cofactor. The cofactor is Mn(2+).

Its subcellular location is the cytoplasm. It catalyses the reaction (2R,3S)-3-isopropylmalate + NAD(+) = 4-methyl-2-oxopentanoate + CO2 + NADH. Its pathway is amino-acid biosynthesis; L-leucine biosynthesis; L-leucine from 3-methyl-2-oxobutanoate: step 3/4. Catalyzes the oxidation of 3-carboxy-2-hydroxy-4-methylpentanoate (3-isopropylmalate) to 3-carboxy-4-methyl-2-oxopentanoate. The product decarboxylates to 4-methyl-2 oxopentanoate. The polypeptide is 3-isopropylmalate dehydrogenase (Symbiobacterium thermophilum (strain DSM 24528 / JCM 14929 / IAM 14863 / T)).